Consider the following 554-residue polypeptide: Glutamine--tRNA ligase (554 aa).

The short motif at 34–44 (PEPNGYLHIGH) is the 'HIGH' region element. Residues 35–37 (EPN) and 41–47 (HIGHAKS) each bind ATP. L-glutamine is bound by residues aspartate 67 and tyrosine 212. ATP is bound by residues threonine 231, 261 to 262 (RL), and 269 to 271 (MSK). A 'KMSKS' region motif is present at residues 268–272 (VMSKR). The tract at residues 317-324 (TKQDNTIE) is interaction with tRNA.

The protein belongs to the class-I aminoacyl-tRNA synthetase family. As to quaternary structure, monomer.

It is found in the cytoplasm. It carries out the reaction tRNA(Gln) + L-glutamine + ATP = L-glutaminyl-tRNA(Gln) + AMP + diphosphate. The sequence is that of Glutamine--tRNA ligase from Shigella boydii serotype 18 (strain CDC 3083-94 / BS512).